A 35-amino-acid polypeptide reads, in one-letter code: Small toxic polypeptide LdrD (35 aa).

A helical transmembrane segment spans residues 10–32 (FWHDLAAPVIAGILASMIVNWLN).

The protein belongs to the Ldr toxic peptide family.

It is found in the cell inner membrane. Toxic component of a type I toxin-antitoxin (TA) system. Overexpression causes rapid cell killing and nucleoid condensation of the host cell. Overexpression induces stress-response and a number of membrane protein genes. May inhibit ATP synthesis due to its insertion in the cell inner membrane. This chain is Small toxic polypeptide LdrD (ldrD), found in Escherichia coli (strain K12).